Reading from the N-terminus, the 310-residue chain is Vomeronasal type-1 receptor 93 (310 aa).

Over 1 to 20 the chain is Extracellular; sequence MNKDNTLHVDTIMKITMFSE. Residues 21 to 41 form a helical membrane-spanning segment; that stretch reads VSVGILANSILFFAHLCMLLG. Over 42-59 the chain is Cytoplasmic; that stretch reads ENKPKPIHLYIASLSLTQ. A helical membrane pass occupies residues 60 to 80; it reads LMLLITMGLIAADMFISQGIW. Over 81–93 the chain is Extracellular; it reads DSTSCQSLIYLHR. A disulfide bond links C85 and C172. A helical transmembrane segment spans residues 94-114; that stretch reads LSRGFTLSAACLLNVFWMITL. The Cytoplasmic portion of the chain corresponds to 115-134; that stretch reads SSKKSRLTKFKHNSPHHISG. The chain crosses the membrane as a helical span at residues 135-155; it reads AFLLLCVLYMCFSSHLILSII. Residues 156 to 193 are Extracellular-facing; sequence ATPNLTSDNFMYVTKSCSFLPMCYSRTSMFSTTIAVRE. N159 carries an N-linked (GlcNAc...) asparagine glycan. The chain crosses the membrane as a helical span at residues 194–214; the sequence is AFFIGLMALSSGYLVAFLWRH. The Cytoplasmic segment spans residues 215-238; it reads RKQAQHLHSTGLSSKASPEQRATE. Residues 239-259 form a helical membrane-spanning segment; it reads TILLLMSFFVVLYILENVVFY. Residues 260–269 lie on the Extracellular side of the membrane; it reads SRMKFKDGST. Residues 270 to 290 traverse the membrane as a helical segment; sequence FYCVQIIVSHSYATVSSFVFI. The Cytoplasmic portion of the chain corresponds to 291–310; that stretch reads FTEKRMTKILRSVCTRIINI.

The protein belongs to the G-protein coupled receptor 1 family. Expressed in 1-4% of neurons of the vomeronasal organ. Only one pheromone receptor gene may be expressed in a particular neuron. Not expressed in the main olfactory epithelium.

The protein resides in the cell membrane. In terms of biological role, putative pheromone receptor implicated in the regulation of social as well as reproductive behavior. This is Vomeronasal type-1 receptor 93 (Vom1r93) from Rattus norvegicus (Rat).